The following is a 428-amino-acid chain: Divergent protein kinase domain 1A (428 aa).

Topologically, residues 1–27 (MARSLCAGAWLRKPHYLQARLSYMRVK) are cytoplasmic. A helical membrane pass occupies residues 28–48 (YLFFSWLVVFVGSWIIYVQYS). Residues 49 to 428 (TYTELCRGKD…WKKISYTNDS (380 aa)) are Lumenal-facing.

The protein belongs to the DIPK family. Post-translationally, among the many cysteines in the lumenal domain, most are probably involved in disulfide bonds. In terms of tissue distribution, ubiquitous.

The protein localises to the endoplasmic reticulum membrane. The chain is Divergent protein kinase domain 1A (Dipk1a) from Mus musculus (Mouse).